The following is a 415-amino-acid chain: Protein maelstrom homolog (415 aa).

Positions 4–73 form a DNA-binding region, HMG box; the sequence is KKAARNAYFF…DPDSTSTYND (70 aa). The segment at 367–399 is disordered; the sequence is SSDPKYSTDKSERSSFEPRGVKPYQGPSGGGRG. The span at 372–386 shows a compositional bias: basic and acidic residues; the sequence is YSTDKSERSSFEPRG.

It belongs to the maelstrom family.

Its subcellular location is the cytoplasm. The protein resides in the nucleus. Plays a central role during spermatogenesis by repressing transposable elements and preventing their mobilization, which is essential for the germline integrity. Acts via the piRNA metabolic process, which mediates the repression of transposable elements during meiosis by forming complexes composed of piRNAs and Piwi proteins and governs the methylation and subsequent repression of transposons. Its association with piP-bodies suggests a participation in the secondary piRNAs metabolic process. Required for the localization of germ-cell factors to the meiotic nuage. In Xenopus tropicalis (Western clawed frog), this protein is Protein maelstrom homolog (mael).